A 106-amino-acid chain; its full sequence is uncharacterized protein (106 aa).

The HTH hxlR-type domain maps to 1–93; it reads MSIFYVLGKK…WEAKWKEAKI (93 aa).

This is an uncharacterized protein from Methanocaldococcus jannaschii (strain ATCC 43067 / DSM 2661 / JAL-1 / JCM 10045 / NBRC 100440) (Methanococcus jannaschii).